The primary structure comprises 908 residues: WD repeat-containing protein 44 (908 aa).

The interval methionine 1 to lysine 163 is binding activity. Phosphoserine occurs at positions 17, 40, 61, 71, 86, and 116. Composition is skewed to polar residues over residues glutamine 108–alanine 120 and asparagine 148–aspartate 157. Disordered regions lie at residues glutamine 108–glutamine 158, alanine 202–isoleucine 273, threonine 309–threonine 341, valine 391–glutamine 418, and aspartate 454–tyrosine 474. A phosphothreonine mark is found at threonine 151 and threonine 211. The segment at proline 203–proline 249 is important for interaction with ARHGAP26 AND ARHGAP10. The segment covering proline 225–proline 248 has biased composition (pro residues). At serine 254 the chain carries Phosphoserine. Residues serine 254–lysine 270 are compositionally biased toward basic and acidic residues. Threonine 263 is modified (phosphothreonine). The tract at residues valine 326–glutamate 339 is important for interaction with RAB11A. Phosphoserine is present on residues serine 334 and serine 336. Residues threonine 341 and threonine 396 each carry the phosphothreonine modification. Serine 398, serine 465, serine 466, and serine 467 each carry phosphoserine. The span at aspartate 462–glycine 471 shows a compositional bias: acidic residues. Tyrosine 474 carries the phosphotyrosine modification. The stretch at glutamate 504 to asparagine 543 is one WD 1 repeat. Positions glutamate 552–asparagine 587 are disordered. Phosphoserine occurs at positions 556 and 560. Residues serine 556 to lysine 568 show a composition bias toward low complexity. WD repeat units follow at residues glycine 600 to cysteine 638, glutamine 640 to tryptophan 680, glycine 685 to glutamine 724, lysine 735 to lysine 774, and valine 779 to threonine 818.

Interacts preferentially with the GTP-bound form of RAB11 when membrane-associated. Interacts with GRAF1/ARHGAP26 or GRAF2/ARHGAP10; the interaction connects the endoplasmic reticulum (ER) with the endosomal tubule. Interacts with VAPA (via MSP domain) or VAPB (via MSP domain); the interaction connects the ER with the endosomal tubule. Does not bind to other Rab and Rho small G proteins. Post-translationally, phosphorylated by ATK1; the phosphorylation stabilizes its interaction with RAB11A and RAB11B. In terms of tissue distribution, expressed in heart; brain; spleen; lung; liver; muscle and kidney.

The protein resides in the cytoplasm. Its subcellular location is the cytosol. It localises to the perinuclear region. The protein localises to the endosome membrane. It is found in the golgi apparatus. The protein resides in the trans-Golgi network. Functionally, downstream effector for Rab11 which regulates Rab11 intracellular membrane trafficking functions such as endocytic recycling, intracellular ciliogenesis and protein export. ATK1-mediated phosphorylation of WDR44 induces binding to Rab11 which activates endocytic recycling of transferrin receptor back to the plasma membrane. When bound to Rab11, prevents the formation of the ciliogenic Rab11-Rabin8/RAB3IP-RAB11FIP3 complex, therefore inhibiting preciliary trafficking and ciliogenesis. May participate in neo-synthesized protein export by connecting the endoplasmic reticulum (ER) with the endosomal tubule via direct interactions with the integral ER proteins VAPA or VAPB and the endosomal protein GRAFs (GRAF1/ARHGAP26 or GRAF2/ARHGAP10), which facilitates the transfer of proteins such as E-cadherin, MPP14 and CFTR into a Rab8-Rab10-Rab11-dependent export route. The chain is WD repeat-containing protein 44 from Rattus norvegicus (Rat).